We begin with the raw amino-acid sequence, 545 residues long: ATP synthase subunit alpha (545 aa).

172 to 179 (GDRKTGKT) provides a ligand contact to ATP.

The protein belongs to the ATPase alpha/beta chains family. F-type ATPases have 2 components, CF(1) - the catalytic core - and CF(0) - the membrane proton channel. CF(1) has five subunits: alpha(3), beta(3), gamma(1), delta(1), epsilon(1). CF(0) has three main subunits: a(1), b(2) and c(9-12). The alpha and beta chains form an alternating ring which encloses part of the gamma chain. CF(1) is attached to CF(0) by a central stalk formed by the gamma and epsilon chains, while a peripheral stalk is formed by the delta and b chains.

The protein resides in the cell membrane. The catalysed reaction is ATP + H2O + 4 H(+)(in) = ADP + phosphate + 5 H(+)(out). Functionally, produces ATP from ADP in the presence of a proton gradient across the membrane. The alpha chain is a regulatory subunit. The polypeptide is ATP synthase subunit alpha (Corynebacterium urealyticum (strain ATCC 43042 / DSM 7109)).